The following is a 300-amino-acid chain: Junctional adhesion molecule A (300 aa).

The signal sequence occupies residues 1–26 (MGTEGKAGRKLLFLFTSMILGSLVQG). Topologically, residues 27 to 238 (KGSVYTAQSD…MDAVELNVGG (212 aa)) are extracellular. 2 consecutive Ig-like V-type domains span residues 28-122 (GSVY…GEVS) and 134-230 (PTIS…AHMD). The N-linked (GlcNAc...) asparagine glycan is linked to asparagine 42. Disulfide bonds link cysteine 49/cysteine 108 and cysteine 152/cysteine 212. Residue asparagine 185 is glycosylated (N-linked (GlcNAc...) asparagine). A helical transmembrane segment spans residues 239–259 (IVAAVLVTLILLGLLIFGVWF). Topologically, residues 260-299 (AYSRGYFERTKKGTAPGKKVIYSQPSTRSEGEFKQTSSFL) are cytoplasmic. 3 positions are modified to phosphoserine: serine 282, serine 285, and serine 288.

It belongs to the immunoglobulin superfamily. As to quaternary structure, interacts with the ninth PDZ domain of MPDZ. Interacts with the first PDZ domain of PARD3. The association between PARD3 and PARD6B probably disrupts this interaction. Interacts with ITGAL (via I-domain). Interacts with CD151.

It localises to the cell junction. The protein localises to the tight junction. The protein resides in the cell membrane. Functionally, seems to play a role in epithelial tight junction formation. Appears early in primordial forms of cell junctions and recruits PARD3. The association of the PARD6-PARD3 complex may prevent the interaction of PARD3 with JAM1, thereby preventing tight junction assembly. Plays a role in regulating monocyte transmigration involved in integrity of epithelial barrier. Ligand for integrin alpha-L/beta-2 involved in memory T-cell and neutrophil transmigration. Involved in platelet activation. This chain is Junctional adhesion molecule A (F11r), found in Mus musculus (Mouse).